The sequence spans 753 residues: Probable dipeptidyl peptidase 4 (753 aa).

The first 18 residues, 1-18 (MKTSQFLSLLLLAGIAQA), serve as a signal peptide directing secretion. Asparagine 84, asparagine 114, and asparagine 222 each carry an N-linked (GlcNAc...) asparagine glycan. Residues serine 616, aspartate 668, and histidine 703 each act as charge relay system in the active site.

The protein belongs to the peptidase S9B family.

Its subcellular location is the secreted. It catalyses the reaction Release of an N-terminal dipeptide, Xaa-Yaa-|-Zaa-, from a polypeptide, preferentially when Yaa is Pro, provided Zaa is neither Pro nor hydroxyproline.. Extracellular dipeptidyl-peptidase which removes N-terminal dipeptides sequentially from polypeptides having unsubstituted N-termini provided that the penultimate residue is proline. Contributes to pathogenicity. In Trichophyton verrucosum (strain HKI 0517), this protein is Probable dipeptidyl peptidase 4 (DPP4).